The sequence spans 558 residues: CTP synthase (558 aa).

The interval 1-267 (MAKFVFVTGG…CLEMLDVLNL (267 aa)) is amidoligase domain. Ser-13 is a binding site for CTP. Ser-13 provides a ligand contact to UTP. Residues 14–19 (SIGKGI) and Asp-71 contribute to the ATP site. Residues Asp-71 and Glu-141 each coordinate Mg(2+). CTP-binding positions include 148–150 (DIE), 188–193 (KTKPTQ), and Lys-224. UTP-binding positions include 188–193 (KTKPTQ) and Lys-224. The region spanning 292–534 (KVALVGKYVQ…IEAAQLRLPA (243 aa)) is the Glutamine amidotransferase type-1 domain. Residue Gly-354 participates in L-glutamine binding. Cys-381 serves as the catalytic Nucleophile; for glutamine hydrolysis. L-glutamine is bound by residues 382 to 385 (LGMQ), Glu-405, and Arg-462. Residues His-507 and Glu-509 contribute to the active site. Positions 536–558 (PDEALRRQSQTNISAQEQPSRIG) are disordered. The span at 542 to 558 (RQSQTNISAQEQPSRIG) shows a compositional bias: polar residues.

Belongs to the CTP synthase family. As to quaternary structure, homotetramer.

The catalysed reaction is UTP + L-glutamine + ATP + H2O = CTP + L-glutamate + ADP + phosphate + 2 H(+). It catalyses the reaction L-glutamine + H2O = L-glutamate + NH4(+). It carries out the reaction UTP + NH4(+) + ATP = CTP + ADP + phosphate + 2 H(+). It functions in the pathway pyrimidine metabolism; CTP biosynthesis via de novo pathway; CTP from UDP: step 2/2. Allosterically activated by GTP, when glutamine is the substrate; GTP has no effect on the reaction when ammonia is the substrate. The allosteric effector GTP functions by stabilizing the protein conformation that binds the tetrahedral intermediate(s) formed during glutamine hydrolysis. Inhibited by the product CTP, via allosteric rather than competitive inhibition. Its function is as follows. Catalyzes the ATP-dependent amination of UTP to CTP with either L-glutamine or ammonia as the source of nitrogen. Regulates intracellular CTP levels through interactions with the four ribonucleotide triphosphates. This Prochlorococcus marinus (strain MIT 9313) protein is CTP synthase.